The chain runs to 312 residues: DNA-directed RNA polymerase subunit alpha (312 aa).

Positions 1-229 (MLQYQIDRIE…ELFQPLATVT (229 aa)) are alpha N-terminal domain (alpha-NTD). Residues 239–312 (EPSAEAQIPL…ISIPQSRTSA (74 aa)) form an alpha C-terminal domain (alpha-CTD) region.

It belongs to the RNA polymerase alpha chain family. In terms of assembly, in cyanobacteria the RNAP catalytic core is composed of 2 alpha, 1 beta, 1 beta', 1 gamma and 1 omega subunit. When a sigma factor is associated with the core the holoenzyme is formed, which can initiate transcription.

It carries out the reaction RNA(n) + a ribonucleoside 5'-triphosphate = RNA(n+1) + diphosphate. Functionally, DNA-dependent RNA polymerase catalyzes the transcription of DNA into RNA using the four ribonucleoside triphosphates as substrates. The protein is DNA-directed RNA polymerase subunit alpha of Synechococcus sp. (strain CC9605).